The primary structure comprises 352 residues: Ion-translocating oxidoreductase complex subunit D (352 aa).

Transmembrane regions (helical) follow at residues I20–G40, G42–L62, I89–A109, and P123–L143. FMN phosphoryl threonine is present on T187. Helical transmembrane passes span I214–L234, W242–F262, L267–L287, L301–P321, and D322–T342.

The protein belongs to the NqrB/RnfD family. As to quaternary structure, the complex is composed of six subunits: RsxA, RsxB, RsxC, RsxD, RsxE and RsxG. FMN is required as a cofactor.

It is found in the cell inner membrane. Part of a membrane-bound complex that couples electron transfer with translocation of ions across the membrane. Required to maintain the reduced state of SoxR. The protein is Ion-translocating oxidoreductase complex subunit D of Shigella boydii serotype 18 (strain CDC 3083-94 / BS512).